We begin with the raw amino-acid sequence, 176 residues long: Large ribosomal subunit protein uL6 (176 aa).

The segment covering 151 to 170 has biased composition (basic and acidic residues); that stretch reads RPPEPYKGKGVRYADEQVRR. Residues 151–176 form a disordered region; that stretch reads RPPEPYKGKGVRYADEQVRRKEAKKK.

Belongs to the universal ribosomal protein uL6 family. In terms of assembly, part of the 50S ribosomal subunit.

This protein binds to the 23S rRNA, and is important in its secondary structure. It is located near the subunit interface in the base of the L7/L12 stalk, and near the tRNA binding site of the peptidyltransferase center. The sequence is that of Large ribosomal subunit protein uL6 from Shewanella pealeana (strain ATCC 700345 / ANG-SQ1).